A 209-amino-acid polypeptide reads, in one-letter code: MADFYYLPGSSPCRSVIMTAKAVGVELNKKLLNLRAGEHLKPEFLKINPQHTIPTLVDNGFALWESRAIQVYLVEKYGKTDSLYPKCPKKRAVINQRLYFDMGTLYQSFANYYYPQVFAKAPADPEAFKKIESAFEFLNTFLEGQEYAAGDSLTVADIALVASVSTFEVAGFEISKYANVNKWYENAKKVTPGWEENWAGCLEFKKFFE.

The GST N-terminal domain maps to methionine 1–aspartate 81. Glutathione-binding positions include serine 10, histidine 51–isoleucine 53, and glutamate 65–arginine 67. The 123-residue stretch at cysteine 87–glutamate 209 folds into the GST C-terminal domain.

The protein belongs to the GST superfamily. Theta family. In terms of assembly, homodimer.

It catalyses the reaction RX + glutathione = an S-substituted glutathione + a halide anion + H(+). It carries out the reaction 1,1,1-trichloro-2,2-bis(4-chlorophenyl)ethane = 1,1-dichloro-2,2-bis(4-chlorophenyl)ethylene + chloride + H(+). Functionally, conjugation of reduced glutathione to a wide number of exogenous and endogenous hydrophobic electrophiles. Has DDT dehydrochlorinase activity. This chain is Glutathione S-transferase 1-1 (GstD1), found in Drosophila sechellia (Fruit fly).